Here is a 293-residue protein sequence, read N- to C-terminus: SAGA-associated factor 29 (293 aa).

Residues 3–88 (LVSADSRIAE…KALDKIAEIK (86 aa)) are a coiled coil. An SGF29 C-terminal domain is found at 152-293 (GDYVAKPGDK…VVACKEPKKK (142 aa)). Histone H3K4me3 N-terminus binding stretches follow at residues 194–196 (DID) and 240–243 (QTTC). The histone H3K4me3 binding stretch occupies residues 264–266 (FED). Lysine 288 carries the N6-acetyllysine modification.

Belongs to the SGF29 family. Interacts with dimethylated and trimethylated 'Lys-4' of histone H3 (H3K4me2 and H3K4me3), with a preference for the trimethylated form (H3K4me3). Component of some SAGA-type complexes. Component of the ADA2A-containing complex (ATAC), composed of KAT14, KAT2A, TADA2L, TADA3L, ZZ3, MBIP, WDR5, YEATS2, CCDC101 and DR1. Interacts with (methylated) CGAS. Interacts with TADA3L, GCN5L2, SUPT3H and MYC. In terms of tissue distribution, widely expressed with highest levels in testis. Highly expressed in hepatoma and other tumor cell lines.

The protein resides in the nucleus. Functionally, chromatin reader component of some histone acetyltransferase (HAT) SAGA-type complexes like the TFTC-HAT, ATAC or STAGA complexes. SGF29 specifically recognizes and binds methylated 'Lys-4' of histone H3 (H3K4me), with a preference for trimethylated form (H3K4me3). In the SAGA-type complexes, SGF29 is required to recruit complexes to H3K4me. Involved in the response to endoplasmic reticulum (ER) stress by recruiting the SAGA complex to H3K4me, thereby promoting histone H3 acetylation and cell survival. Also binds non-histone proteins that are methylated on Lys residues: specifically recognizes and binds CGAS monomethylated on 'Lys-491'. May be involved in MYC-mediated oncogenic transformation. The polypeptide is SAGA-associated factor 29 (Rattus norvegicus (Rat)).